Here is a 161-residue protein sequence, read N- to C-terminus: Allophycocyanin alpha-B chain (161 aa).

N4-methylasparagine is present on Asn-71. Cys-81 serves as a coordination point for (2R,3E)-phycocyanobilin.

It belongs to the phycobiliprotein family. In terms of processing, contains one covalently linked bilin chromophore.

Its subcellular location is the plastid. The protein resides in the chloroplast thylakoid membrane. Allophycocyanin is a photosynthetic bile pigment-protein complex with maximum absorption at approximately 650 nanometers. In Porphyra purpurea (Red seaweed), this protein is Allophycocyanin alpha-B chain (apcD).